The chain runs to 152 residues: Acidic phospholipase A2 1 (152 aa).

An N-terminal signal peptide occupies residues 1–19; the sequence is MNPAYFLVLAAVCVSLLGA. A propeptide spanning residues 20–27 is cleaved from the precursor; that stretch reads ANIPPQPL. Intrachain disulfides connect cysteine 38–cysteine 104, cysteine 54–cysteine 151, cysteine 56–cysteine 72, cysteine 71–cysteine 132, cysteine 78–cysteine 125, cysteine 88–cysteine 118, and cysteine 111–cysteine 123. Ca(2+) contacts are provided by tyrosine 55, glycine 57, and glycine 59. Histidine 75 is an active-site residue. Aspartate 76 contacts Ca(2+). The active site involves aspartate 126.

Belongs to the phospholipase A2 family. Group I subfamily. D49 sub-subfamily. It depends on Ca(2+) as a cofactor. Expressed by the venom gland.

It is found in the secreted. The enzyme catalyses a 1,2-diacyl-sn-glycero-3-phosphocholine + H2O = a 1-acyl-sn-glycero-3-phosphocholine + a fatty acid + H(+). Functionally, PLA2 catalyzes the calcium-dependent hydrolysis of the 2-acyl groups in 3-sn-phosphoglycerides. In Bungarus candidus (Malayan krait), this protein is Acidic phospholipase A2 1.